A 49-amino-acid chain; its full sequence is MREKITLECTECKQRNYKSFKNKQNDRDRIELKKYCKFCNRHTLHKESK.

This sequence belongs to the bacterial ribosomal protein bL33 family.

This Natranaerobius thermophilus (strain ATCC BAA-1301 / DSM 18059 / JW/NM-WN-LF) protein is Large ribosomal subunit protein bL33.